A 199-amino-acid polypeptide reads, in one-letter code: Chaperone protein TorD (199 aa).

This sequence belongs to the TorD/DmsD family. TorD subfamily.

It is found in the cytoplasm. Functionally, involved in the biogenesis of TorA. Acts on TorA before the insertion of the molybdenum cofactor and, as a result, probably favors a conformation of the apoenzyme that is competent for acquiring the cofactor. The protein is Chaperone protein TorD of Escherichia coli (strain ATCC 8739 / DSM 1576 / NBRC 3972 / NCIMB 8545 / WDCM 00012 / Crooks).